The primary structure comprises 186 residues: Ribosome-recycling factor (186 aa).

Residues 144 to 163 are disordered; it reads EKDGVIGQDESRAQSERVQK.

This sequence belongs to the RRF family.

Its subcellular location is the cytoplasm. In terms of biological role, responsible for the release of ribosomes from messenger RNA at the termination of protein biosynthesis. May increase the efficiency of translation by recycling ribosomes from one round of translation to another. This Rhizobium etli (strain CIAT 652) protein is Ribosome-recycling factor.